The primary structure comprises 224 residues: Peroxiredoxin-6 (224 aa).

A Thioredoxin domain is found at Leu-5 to Leu-169. The segment at Asp-31–Pro-40 is required and sufficient for targeting to lysosomes and lamellar bodies. The residue at position 44 (Thr-44) is a Phosphothreonine. Cys-47 (cysteine sulfenic acid (-SOH) intermediate; for peroxidase activity) is an active-site residue. Lys-63 is modified (N6-acetyllysine). Phosphotyrosine is present on Tyr-89. The For phospholipase activity role is filled by Asp-140. Residue Thr-177 is modified to Phosphothreonine; by MAPK. Lys-209 carries the post-translational modification N6-acetyllysine; alternate. Residue Lys-209 is modified to N6-succinyllysine; alternate.

It belongs to the peroxiredoxin family. Prx6 subfamily. As to quaternary structure, homodimer. Interacts with GSTP1; mediates PRDX6 glutathionylation and regeneration. Interacts with APEX1. Interacts with STH. May interact with FAM168B. May interact with HTR2A. In terms of processing, irreversibly inactivated by overoxidation of Cys-47 to sulfinic acid (Cys-SO(2)H) and sulfonic acid (Cys-SO(3)H) forms upon oxidative stress. Phosphorylation at Thr-177 by MAP kinases increases the phospholipase activity of the enzyme. The phosphorylated form exhibits a greater lysophosphatidylcholine acyltransferase activity compared to the non-phosphorylated form.

It localises to the cytoplasm. It is found in the lysosome. The enzyme catalyses a hydroperoxide + 2 glutathione = an alcohol + glutathione disulfide + H2O. It carries out the reaction a 1,2-diacyl-sn-glycero-3-phosphocholine + H2O = a 1-acyl-sn-glycero-3-phosphocholine + a fatty acid + H(+). It catalyses the reaction a 1-acyl-sn-glycero-3-phosphocholine + an acyl-CoA = a 1,2-diacyl-sn-glycero-3-phosphocholine + CoA. The catalysed reaction is 1-hexadecanoyl-sn-glycero-3-phosphocholine + hexadecanoyl-CoA = 1,2-dihexadecanoyl-sn-glycero-3-phosphocholine + CoA. The enzyme catalyses 1,2-dihexadecanoyl-sn-glycero-3-phosphocholine + H2O = 1-hexadecanoyl-sn-glycero-3-phosphocholine + hexadecanoate + H(+). Thiol-specific peroxidase that catalyzes the reduction of hydrogen peroxide and organic hydroperoxides to water and alcohols, respectively. Can reduce H(2)O(2) and short chain organic, fatty acid, and phospholipid hydroperoxides. Also has phospholipase activity, and can therefore either reduce the oxidized sn-2 fatty acyl group of phospholipids (peroxidase activity) or hydrolyze the sn-2 ester bond of phospholipids (phospholipase activity). These activities are dependent on binding to phospholipids at acidic pH and to oxidized phospholipds at cytosolic pH. Plays a role in cell protection against oxidative stress by detoxifying peroxides and in phospholipid homeostasis. Exhibits acyl-CoA-dependent lysophospholipid acyltransferase which mediates the conversion of lysophosphatidylcholine (1-acyl-sn-glycero-3-phosphocholine or LPC) into phosphatidylcholine (1,2-diacyl-sn-glycero-3-phosphocholine or PC). Shows a clear preference for LPC as the lysophospholipid and for palmitoyl CoA as the fatty acyl substrate. This chain is Peroxiredoxin-6 (PRDX6), found in Macaca fascicularis (Crab-eating macaque).